The following is a 397-amino-acid chain: Elongation factor Tu (397 aa).

The 198-residue stretch at 10 to 207 folds into the tr-type G domain; it reads KPHVNVGTIG…TLDTYIPEPV (198 aa). The segment at 19–26 is G1; that stretch reads GHVDHGKT. GTP is bound at residue 19–26; it reads GHVDHGKT. Residue threonine 26 coordinates Mg(2+). The G2 stretch occupies residues 60-64; that stretch reads GITIN. The interval 81-84 is G3; it reads DCPG. GTP-binding positions include 81-85 and 136-139; these read DCPGH and NKAD. Positions 136 to 139 are G4; sequence NKAD. Residues 174–176 form a G5 region; it reads SAL.

The protein belongs to the TRAFAC class translation factor GTPase superfamily. Classic translation factor GTPase family. EF-Tu/EF-1A subfamily. Monomer.

The protein resides in the cytoplasm. It catalyses the reaction GTP + H2O = GDP + phosphate + H(+). In terms of biological role, GTP hydrolase that promotes the GTP-dependent binding of aminoacyl-tRNA to the A-site of ribosomes during protein biosynthesis. The protein is Elongation factor Tu of Ectopseudomonas mendocina (strain ymp) (Pseudomonas mendocina).